The primary structure comprises 351 residues: Uroporphyrinogen decarboxylase (351 aa).

Substrate-binding positions include 26–30 (RQAGR), D75, Y151, S206, and H321.

Belongs to the uroporphyrinogen decarboxylase family. Homodimer.

Its subcellular location is the cytoplasm. The catalysed reaction is uroporphyrinogen III + 4 H(+) = coproporphyrinogen III + 4 CO2. Its pathway is porphyrin-containing compound metabolism; protoporphyrin-IX biosynthesis; coproporphyrinogen-III from 5-aminolevulinate: step 4/4. Its function is as follows. Catalyzes the decarboxylation of four acetate groups of uroporphyrinogen-III to yield coproporphyrinogen-III. The protein is Uroporphyrinogen decarboxylase of Koribacter versatilis (strain Ellin345).